We begin with the raw amino-acid sequence, 204 residues long: Spermatogenesis-associated protein 46 (204 aa).

The disordered stretch occupies residues Ser-101–Gly-120.

Testis-specific.

The protein resides in the nucleus membrane. In terms of biological role, plays a role in spermiogenesis and fertilization. In Mus musculus (Mouse), this protein is Spermatogenesis-associated protein 46 (Spata46).